We begin with the raw amino-acid sequence, 1072 residues long: PWWP domain-containing protein 1 (1072 aa).

The interval 21–133 (DSIQDPKVTP…ADEKELDLGL (113 aa)) is disordered. Positions 25–38 (DPKVTPDDTVVDSS) are enriched in low complexity. The segment covering 66–77 (RVLESERSEKDG) has biased composition (basic and acidic residues). Over residues 96–128 (KDDESSEVKEEEEEEDGSDDQSSELGSEADEKE) the composition is skewed to acidic residues. The PWWP domain occupies 173–234 (VGDLVWGKVK…PAELIPFEPN (62 aa)). The disordered stretch occupies residues 365–387 (KSPRSSVSTLEPHNRAPPRAPLS). The span at 366-375 (SPRSSVSTLE) shows a compositional bias: polar residues. A Nuclear localization signal 1 motif is present at residues 402–409 (SKKPTKVK). Disordered stretches follow at residues 486-619 (AIPG…GEAG), 681-738 (LSVS…KTNQ), 871-931 (KAEP…NGNR), and 944-973 (ENSS…SSSV). Basic and acidic residues predominate over residues 498–526 (SLDEEKGLAEKSKERMEERAAVLPEHGKS). Residues 545–568 (AGSSLQPLLESHTSASEGKSSTGS) show a composition bias toward polar residues. Short sequence motifs (nuclear localization signal) lie at residues 596-603 (KKKKKEPD), 705-712 (VKRTEDPS), and 733-740 (LKKTNQLK). Residues 706–729 (KRTEDPSKAGKKRLSSDRQDEIPS) are compositionally biased toward basic and acidic residues. Over residues 871-880 (KAEPREPENT) the composition is skewed to basic and acidic residues. Positions 897 to 906 (LHQPTLPPPN) are enriched in pro residues. Over residues 921–930 (SSSSNNGNGN) the composition is skewed to low complexity. Polar residues predominate over residues 947–966 (SKANTEPPQVTMTLNRNSGP).

The protein belongs to the PDP family. In terms of assembly, interacts with MSI4/FVE. Component of the PRC2 (polycomb repressive complex 2) complex which regulates histone methylation on histone H3K27.

The protein localises to the nucleus. Its function is as follows. Together with PDP2, PDP3 and PDP6, interacts with MSI4/FVE and MSI5 to suppress FLC, MAF4 and MAF5 expression by regulating the function of the PRC2 complex and modulating H3K27me3 level, thereby promoting flowering. The polypeptide is PWWP domain-containing protein 1 (Arabidopsis thaliana (Mouse-ear cress)).